Here is a 237-residue protein sequence, read N- to C-terminus: Ribonuclease PH (237 aa).

Residues arginine 86 and 124–126 (GTR) contribute to the phosphate site.

It belongs to the RNase PH family. In terms of assembly, homohexameric ring arranged as a trimer of dimers.

The enzyme catalyses tRNA(n+1) + phosphate = tRNA(n) + a ribonucleoside 5'-diphosphate. Functionally, phosphorolytic 3'-5' exoribonuclease that plays an important role in tRNA 3'-end maturation. Removes nucleotide residues following the 3'-CCA terminus of tRNAs; can also add nucleotides to the ends of RNA molecules by using nucleoside diphosphates as substrates, but this may not be physiologically important. Probably plays a role in initiation of 16S rRNA degradation (leading to ribosome degradation) during starvation. This Cereibacter sphaeroides (strain ATCC 17029 / ATH 2.4.9) (Rhodobacter sphaeroides) protein is Ribonuclease PH.